The chain runs to 451 residues: Phosphoglucosamine mutase (451 aa).

Ser-107 acts as the Phosphoserine intermediate in catalysis. Ser-107, Asp-246, Asp-248, and Asp-250 together coordinate Mg(2+). Residue Ser-107 is modified to Phosphoserine.

The protein belongs to the phosphohexose mutase family. Mg(2+) serves as cofactor. In terms of processing, activated by phosphorylation.

It catalyses the reaction alpha-D-glucosamine 1-phosphate = D-glucosamine 6-phosphate. Catalyzes the conversion of glucosamine-6-phosphate to glucosamine-1-phosphate. The sequence is that of Phosphoglucosamine mutase from Burkholderia ambifaria (strain ATCC BAA-244 / DSM 16087 / CCUG 44356 / LMG 19182 / AMMD) (Burkholderia cepacia (strain AMMD)).